We begin with the raw amino-acid sequence, 598 residues long: Jacalin-related lectin 17 (598 aa).

The tract at residues 1–23 is disordered; it reads MAQRLEAEGNKNFKGKSKWDDGS. 4 Jacalin-type lectin domains span residues 2 to 148, 151 to 293, 295 to 445, and 452 to 595; these read AQRL…YVTW, PTKL…YFTT, PFTK…HFCP, and GEKV…HVLP.

This sequence belongs to the jacalin lectin family.

The protein is Jacalin-related lectin 17 (JAL17) of Arabidopsis thaliana (Mouse-ear cress).